The sequence spans 80 residues: MEEREGGFRKETVERLLRLHFRDGRTRVNGDALLLMAELLKVFVREAAARAARQAQAEDLEKVDIEHVEKVLPQLLLDFV.

The protein belongs to the CENP-X/MHF2 family. Heterodimer with CENPX, sometimes called MHF; this interaction stabilizes both partners. MHF heterodimers can assemble to form tetrameric structures. MHF also coassemble with CENPT-CENPW heterodimers at centromeres to form the tetrameric CENP-T-W-S-X complex. Forms a discrete complex with FANCM and CENPX, called FANCM-MHF; this interaction, probably mediated by direct binding between CENPS and FANCM, leads to synergistic activation of double-stranded DNA binding and strongly stimulates FANCM-mediated DNA remodeling. Recruited by FANCM to the Fanconi anemia (FA) core complex, which consists of CENPS, CENPX, FANCA, FANCB, FANCC, FANCE, FANCF, FANCG, FANCL, FANCM, FAAP24 and FAAP100. The FA core complex associates with Bloom syndrome (BLM) complex, which consists of at least BLM, DNA topoisomerase 3-alpha (TOP3A), RMI1/BLAP75, RPA1/RPA70 and RPA2/RPA32. The super complex between FA and BLM is called BRAFT.

It localises to the nucleus. Its subcellular location is the chromosome. The protein localises to the centromere. The protein resides in the kinetochore. DNA-binding component of the Fanconi anemia (FA) core complex. Required for the normal activation of the FA pathway, leading to monoubiquitination of the FANCI-FANCD2 complex in response to DNA damage, cellular resistance to DNA cross-linking drugs, and prevention of chromosomal breakage. In complex with CENPS (MHF heterodimer), crucial cofactor for FANCM in both binding and ATP-dependent remodeling of DNA. Stabilizes FANCM. In complex with CENPS and FANCM (but not other FANC proteins), rapidly recruited to blocked forks and promotes gene conversion at blocked replication forks. In complex with CENPS, CENPT and CENPW (CENP-T-W-S-X heterotetramer), involved in the formation of a functional kinetochore outer plate, which is essential for kinetochore-microtubule attachment and faithful mitotic progression. As a component of MHF and CENP-T-W-S-X complexes, binds DNA and bends it to form a nucleosome-like structure. DNA-binding function is fulfilled in the presence of CENPS, with the following preference for DNA substates: Holliday junction &gt; double-stranded &gt; splay arm &gt; single-stranded. Does not bind DNA on its own. The polypeptide is Centromere protein X (CENPX) (Gallus gallus (Chicken)).